Consider the following 341-residue polypeptide: tRNA N6-adenosine threonylcarbamoyltransferase (341 aa).

H115 and H119 together coordinate Fe cation. Residues 137–141 (IVSGG), D170, G183, D187, and N276 each bind substrate. Residue D304 coordinates Fe cation.

Belongs to the KAE1 / TsaD family. The cofactor is Fe(2+).

It is found in the cytoplasm. It carries out the reaction L-threonylcarbamoyladenylate + adenosine(37) in tRNA = N(6)-L-threonylcarbamoyladenosine(37) in tRNA + AMP + H(+). Functionally, required for the formation of a threonylcarbamoyl group on adenosine at position 37 (t(6)A37) in tRNAs that read codons beginning with adenine. Is involved in the transfer of the threonylcarbamoyl moiety of threonylcarbamoyl-AMP (TC-AMP) to the N6 group of A37, together with TsaE and TsaB. TsaD likely plays a direct catalytic role in this reaction. This chain is tRNA N6-adenosine threonylcarbamoyltransferase, found in Staphylococcus aureus (strain JH1).